Here is a 2434-residue protein sequence, read N- to C-terminus: Protein Ycf2 (2434 aa).

Position 1693 to 1700 (1693 to 1700 (GPTETGRS)) interacts with ATP.

It belongs to the Ycf2 family.

It localises to the plastid. The protein localises to the chloroplast stroma. Probable ATPase of unknown function. Its presence in a non-photosynthetic plant (Epifagus virginiana) and experiments in tobacco indicate that it has an essential function which is probably not related to photosynthesis. In Cycas taitungensis (Prince sago), this protein is Protein Ycf2.